The primary structure comprises 281 residues: 4-diphosphocytidyl-2-C-methyl-D-erythritol kinase (281 aa).

Catalysis depends on residues Lys11 and Asp138.

It belongs to the GHMP kinase family. IspE subfamily.

It catalyses the reaction 4-CDP-2-C-methyl-D-erythritol + ATP = 4-CDP-2-C-methyl-D-erythritol 2-phosphate + ADP + H(+). The protein operates within isoprenoid biosynthesis; isopentenyl diphosphate biosynthesis via DXP pathway; isopentenyl diphosphate from 1-deoxy-D-xylulose 5-phosphate: step 3/6. Its function is as follows. Catalyzes the phosphorylation of the position 2 hydroxy group of 4-diphosphocytidyl-2C-methyl-D-erythritol. In Pelagibacter ubique (strain HTCC1062), this protein is 4-diphosphocytidyl-2-C-methyl-D-erythritol kinase.